Reading from the N-terminus, the 416-residue chain is Enolase (416 aa).

Q162 contacts (2R)-2-phosphoglycerate. The active-site Proton donor is the E204. Mg(2+) is bound by residues D241, E282, and D309. 4 residues coordinate (2R)-2-phosphoglycerate: K334, R363, S364, and K385. K334 acts as the Proton acceptor in catalysis.

The protein belongs to the enolase family. Mg(2+) serves as cofactor.

Its subcellular location is the cytoplasm. The protein localises to the secreted. It localises to the cell surface. The enzyme catalyses (2R)-2-phosphoglycerate = phosphoenolpyruvate + H2O. It functions in the pathway carbohydrate degradation; glycolysis; pyruvate from D-glyceraldehyde 3-phosphate: step 4/5. Its function is as follows. Catalyzes the reversible conversion of 2-phosphoglycerate (2-PG) into phosphoenolpyruvate (PEP). It is essential for the degradation of carbohydrates via glycolysis. This chain is Enolase, found in Campylobacter concisus (strain 13826).